Here is a 561-residue protein sequence, read N- to C-terminus: Asparagine synthetase [glutamine-hydrolyzing] (561 aa).

The active-site For GATase activity is the Cys2. Residues 2-191 (CGIWALFGSD…PGHYEVLDLK (190 aa)) enclose the Glutamine amidotransferase type-2 domain. L-glutamine is bound by residues 49-53 (RLAVV), 75-77 (NGE), and Asp97. Positions 213–536 (HALYDNVEKL…PGRADWLSHY (324 aa)) constitute an Asparagine synthetase domain. ATP-binding positions include Leu256, Ile288, and 363-364 (SG). Lys385 is subject to N6-acetyllysine. Thr545 is subject to Phosphothreonine. At Ser557 the chain carries Phosphoserine.

The enzyme catalyses L-aspartate + L-glutamine + ATP + H2O = L-asparagine + L-glutamate + AMP + diphosphate + H(+). Its pathway is amino-acid biosynthesis; L-asparagine biosynthesis; L-asparagine from L-aspartate (L-Gln route): step 1/1. This Pongo abelii (Sumatran orangutan) protein is Asparagine synthetase [glutamine-hydrolyzing] (ASNS).